The chain runs to 1377 residues: Clustered mitochondria protein homolog (1377 aa).

Residues 1–61 (MLKSIQRNGK…GETKKKSDSE (61 aa)) form a disordered region. The region spanning 353–595 (RAEDTFSSKL…RTFPPDVNFL (243 aa)) is the Clu domain. The TPR 1 repeat unit spans residues 519 to 552 (VYGSIDFGKTVLSHEKYLELLNNAGKHLKIYPHS). Disordered stretches follow at residues 651 to 700 (NKRQ…VPKV) and 886 to 917 (DVLTKSGSSGKQQRKQNKRTAAGGGKGGKSSF). Residues 655–690 (QKQDTPKEETKAIEPAAKEDSANNNKEEPAAKKGEP) are compositionally biased toward basic and acidic residues. Residues 886–896 (DVLTKSGSSGK) show a composition bias toward polar residues. TPR repeat units follow at residues 1022 to 1055 (AYNFYTTGQTKIQQGYFKDGYDLISEALNLLNNV), 1148 to 1181 (ALLDSNISLILHAVGEYELSLRFLEHALALNIKY), and 1183 to 1216 (GEKSLKVAVSYHLVARTQSCMGDFRSALNNEKET). The disordered stretch occupies residues 1310–1377 (KEGGAAGESS…SKANPVASSS (68 aa)). Residues 1364-1377 (ASSSSKANPVASSS) show a composition bias toward low complexity.

The protein belongs to the CLU family.

The protein resides in the cytoplasm. MRNA-binding protein involved in proper cytoplasmic distribution of mitochondria. The polypeptide is Clustered mitochondria protein homolog (Culex quinquefasciatus (Southern house mosquito)).